A 103-amino-acid chain; its full sequence is Histone H4 (103 aa).

Gly residues predominate over residues 1–14; sequence MSGRGKGGKGLGKG. The disordered stretch occupies residues 1–20; it reads MSGRGKGGKGLGKGGAKRHR. Serine 2 bears the N-acetylserine mark. N6-acetyllysine is present on lysine 17. A DNA-binding region spans residues 17 to 21; that stretch reads KRHRK. Lysine 21 carries the N6-methyllysine modification.

The protein belongs to the histone H4 family. The nucleosome is a histone octamer containing two molecules each of H2A, H2B, H3 and H4 assembled in one H3-H4 heterotetramer and two H2A-H2B heterodimers. The octamer wraps approximately 147 bp of DNA.

It is found in the nucleus. It localises to the chromosome. In terms of biological role, core component of nucleosome. Nucleosomes wrap and compact DNA into chromatin, limiting DNA accessibility to the cellular machineries which require DNA as a template. Histones thereby play a central role in transcription regulation, DNA repair, DNA replication and chromosomal stability. DNA accessibility is regulated via a complex set of post-translational modifications of histones, also called histone code, and nucleosome remodeling. This chain is Histone H4, found in Capsicum annuum (Capsicum pepper).